The following is a 464-amino-acid chain: Divalent metal cation transporter MntH (464 aa).

11 helical membrane-spanning segments follow: residues 57–77 (ILIA…AGGA), 82–102 (SLLS…SMAA), 125–145 (GIIL…AEII), 157–177 (IPLV…LLLM), 186–206 (AIVA…VFLA), 229–249 (MLYL…LYLG), 281–301 (LTIA…LFFG), 321–341 (IVGA…LLSS), 376–396 (LLSV…EAKI), 399–419 (LLTL…VPLV), and 443–463 (VATV…VGVI).

Belongs to the NRAMP family.

It localises to the cell membrane. H(+)-stimulated, divalent metal cation uptake system. In Levilactobacillus brevis (Lactobacillus brevis), this protein is Divalent metal cation transporter MntH.